A 466-amino-acid polypeptide reads, in one-letter code: MAEEQDLSEVELSPVGSEEPRCLSPSSAPSLGPDGGGGGSGLRASPGPGELGKVKKEQQDGEADDDKFPVCIREAVSQVLSGYDWTLVPMPVRVNGASKSKPHVKRPMNAFMVWAQAARRKLADQYPHLHNAELSKTLGKLWRLLNESDKRPFIEEAERLRMQHKKDHPDYKYQPRRRKNGKAAQGEAECPGGETDQGGAAAIQAHYKSAHLDHRHPEEGSPMSDGNPEHPSGQSHGPPTPPTTPKTELQSGKADPKRDGRSLGEGGKPHIDFGNVDIGEISHEVMSNMETFDVTELDQYLPPNGHPGHVGSYSAAGYGLSSALAVASGHSAWISKPPGVALPTVSPPAVDAKAQVKTETTGPQGPPHYTDQPSTSQIAYTSLSLPHYGSAFPSISRPQFDYSDHQPSGPYYGHAGQASGLYSAFSYMGPSQRPLYTAISDPSPSGPQSHSPTHWEQPVYTTLSRP.

Disordered regions lie at residues M1–K67, L160–G198, D213–N275, Q355–T375, and R433–P466. The span at L23–G32 shows a compositional bias: low complexity. S24 carries the post-translational modification Phosphoserine. Positions E62–P102 are dimerization (DIM). Residues V104 to K172 constitute a DNA-binding region (HMG box). Basic and acidic residues-rich tracts occupy residues L160 to Y173 and A254 to I271. Residues P228–V310 are transactivation domain (TAM). The tract at residues K353–P466 is transactivation domain (TAC). Positions S440–P466 are enriched in polar residues.

As to quaternary structure, monomer. Interacts with Armcx3 at the mitochondrial outer membrane surface. Interacts with PAX3. Predominant expression in glial cells of the nervous system.

It is found in the cytoplasm. Its subcellular location is the nucleus. The protein resides in the mitochondrion outer membrane. Its function is as follows. Transcription factor that plays a central role in developing and mature glia. Specifically activates expression of myelin genes, during oligodendrocyte (OL) maturation, such as DUSP15 and MYRF, thereby playing a central role in oligodendrocyte maturation and CNS myelination. Once induced, MYRF cooperates with SOX10 to implement the myelination program. Transcriptional activator of MITF, acting synergistically with PAX3. Transcriptional activator of MBP, via binding to the gene promoter. The chain is Transcription factor SOX-10 (Sox10) from Rattus norvegicus (Rat).